The chain runs to 179 residues: ATP synthase subunit delta (179 aa).

The protein belongs to the ATPase delta chain family. In terms of assembly, F-type ATPases have 2 components, F(1) - the catalytic core - and F(0) - the membrane proton channel. F(1) has five subunits: alpha(3), beta(3), gamma(1), delta(1), epsilon(1). F(0) has three main subunits: a(1), b(2) and c(10-14). The alpha and beta chains form an alternating ring which encloses part of the gamma chain. F(1) is attached to F(0) by a central stalk formed by the gamma and epsilon chains, while a peripheral stalk is formed by the delta and b chains.

The protein localises to the cell inner membrane. Its function is as follows. F(1)F(0) ATP synthase produces ATP from ADP in the presence of a proton or sodium gradient. F-type ATPases consist of two structural domains, F(1) containing the extramembraneous catalytic core and F(0) containing the membrane proton channel, linked together by a central stalk and a peripheral stalk. During catalysis, ATP synthesis in the catalytic domain of F(1) is coupled via a rotary mechanism of the central stalk subunits to proton translocation. Functionally, this protein is part of the stalk that links CF(0) to CF(1). It either transmits conformational changes from CF(0) to CF(1) or is implicated in proton conduction. The sequence is that of ATP synthase subunit delta from Maricaulis maris (strain MCS10) (Caulobacter maris).